The chain runs to 184 residues: MNWRSEHIWIEFITGSRKTSNFGWACILFLGSLGFLVVGASSYLGRNLISVFPSQQIVFFPQGIVMSFYGIAGLFISSYLWCTISWNVGSGYDRFDRKEGIVCIFRWGFPGINRRIFLRFFIRDIQSIRIEVKEGLYSRRVLYMEIRGQGAIPLTRTDENLTPREIEQKAADSAYFLRVPIEVF.

2 helical membrane-spanning segments follow: residues 22–42 (FGWA…GASS) and 57–77 (IVFF…LFIS).

The protein belongs to the Ycf4 family.

The protein localises to the plastid. It is found in the chloroplast thylakoid membrane. Functionally, seems to be required for the assembly of the photosystem I complex. This Acorus calamus (Sweet flag) protein is Photosystem I assembly protein Ycf4.